The chain runs to 456 residues: Transcription factor tau subunit sfc1 (456 aa).

2 disordered regions span residues 394–416 (DRYS…GLNT) and 437–456 (HEGF…IFGD). Polar residues predominate over residues 407–416 (LNDTVRGLNT). Residues 441–456 (EDLEEIDDDYDDIFGD) are compositionally biased toward acidic residues.

Component of the TFIIIC complex including sfc1, sfc3, sfc4, sfc6 and sfc7. The subunits are organized in two globular domains, tauA and tauB, connected by a proteolysis-sensitive and flexible linker. Interacts with sfc3, sfc4 and sfc6. In terms of processing, phosphorylated.

It localises to the nucleus. Its function is as follows. TFIIIC mediates tRNA and 5S RNA gene activation by binding to intragenic promoter elements. Upstream of the transcription start site, TFIIIC assembles the initiation complex TFIIIB-TFIIIC-tDNA, which is sufficient for RNA polymerase III recruitment and function. Part of the tauA domain of TFIIIC that binds boxA DNA promoter sites of tRNA and similar genes. Participates in the interconnection of tauA with tauB via its contacts with sfc3 and sfc6. Serves as a scaffold critical for tauA-DNA spatial configuration and tauB-DNA stability. Localizes to chromatin insulator sequence without recruiting RNA polymerase III and plays a role in nuclear organization. The polypeptide is Transcription factor tau subunit sfc1 (sfc1) (Schizosaccharomyces pombe (strain 972 / ATCC 24843) (Fission yeast)).